Here is a 294-residue protein sequence, read N- to C-terminus: Homeobox-leucine zipper protein ATHB-13 (294 aa).

Positions 82-141 (MGEKKRRLNMEQVKTLEKNFELGNKLEPERKMQLARALGLQPRQIAIWFQNRRARWKTKQ) form a DNA-binding region, homeobox. The segment at 142–177 (LEKDYDTLKRQFDTLKAENDLLQTHNQKLQAEIMGL) is leucine-zipper. The disordered stretch occupies residues 181–246 (EQTESINLNK…FFPPSPATAT (66 aa)). The segment covering 197-210 (SNRSDNSSDNLRLD) has biased composition (low complexity). A compositionally biased stretch (polar residues) spans 214-223 (APPSNDSTLT).

It belongs to the HD-ZIP homeobox family. Class I subfamily. In terms of tissue distribution, predominantly expressed in leaves and flowers.

The protein localises to the nucleus. Its function is as follows. Probable transcription factor that may act in the sucrose-signaling pathway. In Arabidopsis thaliana (Mouse-ear cress), this protein is Homeobox-leucine zipper protein ATHB-13 (ATHB-13).